Consider the following 163-residue polypeptide: Protein LOL5 (163 aa).

2 stretches are compositionally biased toward polar residues: residues 1-25 and 33-44; these read MSQL…QPQS and LQPQHPPSSTAH. A disordered region spans residues 1-51; sequence MSQLPLASQATTTDLVSTTAMQPQSEGIVDESLQPQHPPSSTAHDSPCLQD. 2 putative zinc finger regions span residues 70–100 and 108–138; these read QMVC…MNYV and KVHC…VTEI.

It is found in the nucleus. In terms of biological role, involved in plant growth and disease resistance. This chain is Protein LOL5 (LOL5), found in Oryza sativa subsp. japonica (Rice).